The primary structure comprises 342 residues: tRNA-dihydrouridine(20/20a) synthase (342 aa).

FMN contacts are provided by residues 10-12 (PMV) and Q63. Catalysis depends on C93, which acts as the Proton donor. Residues K132, H164, 203–205 (NGG), and 225–226 (GR) contribute to the FMN site. Over residues 313–331 (EEEVGEEGEKEKPGPRGQR) the composition is skewed to basic and acidic residues. The interval 313–342 (EEEVGEEGEKEKPGPRGQREAAPGPAREGV) is disordered.

This sequence belongs to the Dus family. DusA subfamily. The cofactor is FMN.

The enzyme catalyses 5,6-dihydrouridine(20) in tRNA + NADP(+) = uridine(20) in tRNA + NADPH + H(+). It catalyses the reaction 5,6-dihydrouridine(20) in tRNA + NAD(+) = uridine(20) in tRNA + NADH + H(+). The catalysed reaction is 5,6-dihydrouridine(20a) in tRNA + NADP(+) = uridine(20a) in tRNA + NADPH + H(+). It carries out the reaction 5,6-dihydrouridine(20a) in tRNA + NAD(+) = uridine(20a) in tRNA + NADH + H(+). Functionally, catalyzes the synthesis of 5,6-dihydrouridine (D), a modified base found in the D-loop of most tRNAs, via the reduction of the C5-C6 double bond in target uridines. Specifically modifies U20 and U20a in tRNAs. This chain is tRNA-dihydrouridine(20/20a) synthase (dus), found in Thermus thermophilus (strain ATCC 27634 / DSM 579 / HB8).